We begin with the raw amino-acid sequence, 362 residues long: 3-dehydroquinate synthase (362 aa).

NAD(+)-binding positions include 71 to 76 (DGEQYK), 105 to 109 (GVVGD), 129 to 130 (TT), Lys142, Lys151, and 169 to 172 (CLKT). Glu184, His247, and His264 together coordinate Zn(2+).

This sequence belongs to the sugar phosphate cyclases superfamily. Dehydroquinate synthase family. NAD(+) serves as cofactor. Requires Co(2+) as cofactor. It depends on Zn(2+) as a cofactor.

The protein resides in the cytoplasm. It carries out the reaction 7-phospho-2-dehydro-3-deoxy-D-arabino-heptonate = 3-dehydroquinate + phosphate. The protein operates within metabolic intermediate biosynthesis; chorismate biosynthesis; chorismate from D-erythrose 4-phosphate and phosphoenolpyruvate: step 2/7. Catalyzes the conversion of 3-deoxy-D-arabino-heptulosonate 7-phosphate (DAHP) to dehydroquinate (DHQ). This chain is 3-dehydroquinate synthase, found in Escherichia coli O157:H7.